Consider the following 443-residue polypeptide: Ribosomal protein uS12 methylthiotransferase RimO (443 aa).

In terms of domain architecture, MTTase N-terminal spans 5–115 (PNIGFISLGC…VMKHVHKYVP (111 aa)). Residues Cys14, Cys50, Cys79, Cys147, Cys151, and Cys154 each contribute to the [4Fe-4S] cluster site. The Radical SAM core domain occupies 133–374 (LTPKHYAYLK…MQVQQRISAA (242 aa)). A TRAM domain is found at 377 to 443 (QQKVGKTLAV…ADEYDLWGTC (67 aa)).

Belongs to the methylthiotransferase family. RimO subfamily. The cofactor is [4Fe-4S] cluster.

The protein localises to the cytoplasm. The catalysed reaction is L-aspartate(89)-[ribosomal protein uS12]-hydrogen + (sulfur carrier)-SH + AH2 + 2 S-adenosyl-L-methionine = 3-methylsulfanyl-L-aspartate(89)-[ribosomal protein uS12]-hydrogen + (sulfur carrier)-H + 5'-deoxyadenosine + L-methionine + A + S-adenosyl-L-homocysteine + 2 H(+). Catalyzes the methylthiolation of an aspartic acid residue of ribosomal protein uS12. In Actinobacillus pleuropneumoniae serotype 7 (strain AP76), this protein is Ribosomal protein uS12 methylthiotransferase RimO.